Here is a 420-residue protein sequence, read N- to C-terminus: Histidine--tRNA ligase (420 aa).

This sequence belongs to the class-II aminoacyl-tRNA synthetase family. In terms of assembly, homodimer.

The protein resides in the cytoplasm. It catalyses the reaction tRNA(His) + L-histidine + ATP = L-histidyl-tRNA(His) + AMP + diphosphate + H(+). The protein is Histidine--tRNA ligase of Saccharopolyspora erythraea (strain ATCC 11635 / DSM 40517 / JCM 4748 / NBRC 13426 / NCIMB 8594 / NRRL 2338).